The following is a 160-amino-acid chain: UPF0758 protein YfjY (160 aa).

Residues 38-160 (AFTSTQAARD…IYSFAEHGLL (123 aa)) enclose the MPN domain. Residues His-109, His-111, and Asp-122 each coordinate Zn(2+). The JAMM motif motif lies at 109 to 122 (HNHPSGDTTPSQAD).

The protein belongs to the UPF0758 family.

In Escherichia coli (strain K12), this protein is UPF0758 protein YfjY (yfjY).